The sequence spans 446 residues: N-succinylarginine dihydrolase (446 aa).

Substrate contacts are provided by residues 19-28, N110, and 137-138; these read AGLSFGNVAS and HR. E174 is a catalytic residue. Residue R213 participates in substrate binding. H249 is an active-site residue. Residues D251 and N364 each contribute to the substrate site. C370 (nucleophile) is an active-site residue.

The protein belongs to the succinylarginine dihydrolase family. As to quaternary structure, homodimer.

It catalyses the reaction N(2)-succinyl-L-arginine + 2 H2O + 2 H(+) = N(2)-succinyl-L-ornithine + 2 NH4(+) + CO2. The protein operates within amino-acid degradation; L-arginine degradation via AST pathway; L-glutamate and succinate from L-arginine: step 2/5. Catalyzes the hydrolysis of N(2)-succinylarginine into N(2)-succinylornithine, ammonia and CO(2). This is N-succinylarginine dihydrolase from Burkholderia cenocepacia (strain ATCC BAA-245 / DSM 16553 / LMG 16656 / NCTC 13227 / J2315 / CF5610) (Burkholderia cepacia (strain J2315)).